Consider the following 1358-residue polypeptide: Nonribosomal peptide synthetase rstn8 (1358 aa).

The tract at residues 1-23 (MSHSSHYSPVDSGMVPSSSSTED) is disordered. Positions 261 to 659 (YRELDRLSSR…LGEVEYRLHQ (399 aa)) are adenylation. Residues 795 to 872 (ETVSPAESTL…DQASLVRPLV (78 aa)) enclose the Carrier domain. Residue Ser832 is modified to O-(pantetheine 4'-phosphoryl)serine. The tract at residues 909 to 1322 (EDIYPCTPLQ…DDYSQALHEL (414 aa)) is condensation.

It belongs to the NRP synthetase family. Pantetheine 4'-phosphate is required as a cofactor.

It carries out the reaction restrictinol + glycine + H(+) = restricticin + H2O. Its pathway is antifungal biosynthesis. Its function is as follows. Nonribosomal peptide synthetase; part of the gene cluster that mediates the biosynthesis of the tetrahydropyranyl antifungal agent restricticin that acts as an inhibitor of CYP51 and blocks the ergosterol biosynthesis. Within the pathway, rstn8 catalyzes the C3 esterification of restrictinol with glycine to yield restricticin. Rstn8 represents an example of the emerging class of single-module NRPS-like enzymes that perform esterification reactions. Rstn8 displays strict substrate specificity toward glycine as no other natural amino acid is accepted. Rstn8 does not recognize desmethylrestrictinol as a substrate, demonstrating that rstn1-catalyzed methylation, possibly protecting the C4-OH, must precede the final esterification step. The highly reducing polyketide synthase rstn3, the short chain dehydrogenase rstn4, the cyclase rstn5, the FAD-dependent monooxygenase rstn6 and the enoylreductase rstn7 are required to generate the first stable intermediate desmethylrestrictinol. Rstn3 with rstn7 biosynthesize the first polyketide chain intermediate that is reduced by rstn4, followed by epoxidation by rstn6 before 6-endo cyclization via epoxide opening by rstn5 leads to desmethylrestrictinol. The methyltransferase rstn1 then catalyzes the C4 O-methylation of desmethylrestrictinol to produce restrictinol, and the nonribosomal peptide synthetase rstn8 catalyzes the C3 esterification of restrictinol with glycine that leads to restricticin. This Aspergillus nomiae NRRL (strain ATCC 15546 / NRRL 13137 / CBS 260.88 / M93) protein is Nonribosomal peptide synthetase rstn8.